We begin with the raw amino-acid sequence, 434 residues long: Alpha-enolase (434 aa).

Ser2 carries the N-acetylserine modification. Position 40 (Ser40) interacts with Mg(2+). Tyr44 bears the Phosphotyrosine mark. At Lys60 the chain carries N6-acetyllysine; alternate. Lys60 carries the post-translational modification N6-succinyllysine; alternate. Lys71 carries the post-translational modification N6-acetyllysine. Lys89 carries the N6-acetyllysine; alternate modification. Lys89 bears the N6-succinyllysine; alternate mark. N6-acetyllysine is present on residues Lys92 and Lys126. Residues His158 and Glu167 each coordinate substrate. N6-acetyllysine occurs at positions 193 and 199. Residue Lys202 is modified to N6-acetyllysine; alternate. Residue Lys202 forms a Glycyl lysine isopeptide (Lys-Gly) (interchain with G-Cter in SUMO2); alternate linkage. Glu210 (proton donor) is an active-site residue. An N6-acetyllysine; alternate mark is found at Lys228 and Lys233. Residue Lys228 is modified to N6-succinyllysine; alternate. Lys228 bears the N6-(2-hydroxyisobutyryl)lysine; alternate mark. N6-malonyllysine; alternate is present on Lys233. Asp245 contacts Mg(2+). Ser254 carries the post-translational modification Phosphoserine. Lys256 bears the N6-acetyllysine mark. Ser263 bears the Phosphoserine mark. An N6-acetyllysine; alternate modification is found at Lys281. Lys281 carries the post-translational modification N6-(2-hydroxyisobutyryl)lysine; alternate. Tyr287 is modified (phosphotyrosine). Position 291 is a phosphoserine (Ser291). Mg(2+) contacts are provided by Glu293 and Asp318. Residues Glu293 and Asp318 each contribute to the substrate site. 2 positions are modified to N6-acetyllysine: Lys335 and Lys343. Catalysis depends on Lys343, which acts as the Proton acceptor. Residues 370 to 373 (SHRS) and Lys394 each bind substrate. Residues 405–434 (AKYNQILRIEEELGSKAKFAGRSFRNPLAK) are required for interaction with PLG. Residue Lys406 is modified to N6-acetyllysine. Position 420 is an N6-acetyllysine; alternate (Lys420). Lys420 is subject to N6-succinyllysine; alternate. Lys420 carries the N6-malonyllysine; alternate modification.

It belongs to the enolase family. In terms of assembly, mammalian enolase is composed of 3 isozyme subunits, alpha, beta and gamma, which can form homodimers or heterodimers which are cell-type and development-specific. ENO1 interacts with PLG in the neuronal plasma membrane and promotes its activation. The C-terminal lysine is required for this binding. In vitro, interacts with several glycolytic enzymes including PKM, PGM, CKM and aldolase. Also binds troponin, in vitro. Interacts with ENO4 and PGAM2. Interacts with CMTM6. Mg(2+) serves as cofactor. Post-translationally, ISGylated. Lysine 2-hydroxyisobutyrylation (Khib) by p300/EP300 activates the phosphopyruvate hydratase activity. In terms of tissue distribution, testis. Found in the principal piece of sperm tail (at protein level). The alpha/alpha homodimer is expressed in embryo and in most adult tissues. The alpha/beta heterodimer and the beta/beta homodimer are found in striated muscle, and the alpha/gamma heterodimer and the gamma/gamma homodimer in neurons. In striated muscle, expression of ENO1 appears to be independent of fiber type.

Its subcellular location is the cytoplasm. It is found in the cell membrane. The enzyme catalyses (2R)-2-phosphoglycerate = phosphoenolpyruvate + H2O. It participates in carbohydrate degradation; glycolysis; pyruvate from D-glyceraldehyde 3-phosphate: step 4/5. Its function is as follows. Glycolytic enzyme the catalyzes the conversion of 2-phosphoglycerate to phosphoenolpyruvate. In addition to glycolysis, involved in various processes such as growth control, hypoxia tolerance and allergic responses. May also function in the intravascular and pericellular fibrinolytic system due to its ability to serve as a receptor and activator of plasminogen on the cell surface of several cell-types such as leukocytes and neurons. Stimulates immunoglobulin production. The sequence is that of Alpha-enolase (Eno1) from Mus musculus (Mouse).